The following is a 201-amino-acid chain: FMN-dependent NADH:quinone oxidoreductase (201 aa).

FMN contacts are provided by residues Ser-9 and 16–18 (SYS).

This sequence belongs to the azoreductase type 1 family. In terms of assembly, homodimer. The cofactor is FMN.

The enzyme catalyses 2 a quinone + NADH + H(+) = 2 a 1,4-benzosemiquinone + NAD(+). It carries out the reaction N,N-dimethyl-1,4-phenylenediamine + anthranilate + 2 NAD(+) = 2-(4-dimethylaminophenyl)diazenylbenzoate + 2 NADH + 2 H(+). In terms of biological role, quinone reductase that provides resistance to thiol-specific stress caused by electrophilic quinones. Also exhibits azoreductase activity. Catalyzes the reductive cleavage of the azo bond in aromatic azo compounds to the corresponding amines. In Mesomycoplasma hyopneumoniae (strain 232) (Mycoplasma hyopneumoniae), this protein is FMN-dependent NADH:quinone oxidoreductase.